Reading from the N-terminus, the 328-residue chain is MAAPLNAQTRAPQATGRAPDFSPYLDFDRAQWRELRKSMPQVLTEEEVVALRGLGENIDLDEVAEVYLPLSRLIHLQVNARQELTVATETFLGTSSARMFPGSHVPFVIGVAGSVAVGKSTTARLLQVLLQRWSSHPRVDLVTTDGFLYPGEELQRRGIMNRKGFPESYDQRALLRFVTDVKSGKFNVRAPVYSHTAYDRVPGKYITVDQPDILIVEGLNVLQTGPTLMVSDLFDFSVYVDARTEDIERWYIERFLQLRDTAFRHPDAHFRHYADIGDEKATAVAREIWQSINLPNLVENILPTRVRASLVLRKSADHLVERVRMRKL.

Positions M1 to P12 are enriched in polar residues. The interval M1–S22 is disordered. G113–S120 is a binding site for ATP.

It belongs to the prokaryotic pantothenate kinase family.

Its subcellular location is the cytoplasm. The catalysed reaction is (R)-pantothenate + ATP = (R)-4'-phosphopantothenate + ADP + H(+). Its pathway is cofactor biosynthesis; coenzyme A biosynthesis; CoA from (R)-pantothenate: step 1/5. In Corynebacterium efficiens (strain DSM 44549 / YS-314 / AJ 12310 / JCM 11189 / NBRC 100395), this protein is Pantothenate kinase.